The sequence spans 53 residues: ATP synthase protein 8 (53 aa).

A helical transmembrane segment spans residues 4-24; that stretch reads MAPISWLLLFIVFSITFILFC.

This sequence belongs to the ATPase protein 8 family. In terms of assembly, F-type ATPases have 2 components, CF(1) - the catalytic core - and CF(0) - the membrane proton channel.

It localises to the mitochondrion membrane. Its function is as follows. Mitochondrial membrane ATP synthase (F(1)F(0) ATP synthase or Complex V) produces ATP from ADP in the presence of a proton gradient across the membrane which is generated by electron transport complexes of the respiratory chain. F-type ATPases consist of two structural domains, F(1) - containing the extramembraneous catalytic core and F(0) - containing the membrane proton channel, linked together by a central stalk and a peripheral stalk. During catalysis, ATP synthesis in the catalytic domain of F(1) is coupled via a rotary mechanism of the central stalk subunits to proton translocation. Part of the complex F(0) domain. Minor subunit located with subunit a in the membrane. The protein is ATP synthase protein 8 (mt:ATPase8) of Drosophila yakuba (Fruit fly).